The primary structure comprises 162 residues: Transcription elongation factor GreA (162 aa).

Residues 44-72 are a coiled coil; it reads ENAEYHAAKEKQSHIERRIAELSDILSRA.

The protein belongs to the GreA/GreB family.

Necessary for efficient RNA polymerase transcription elongation past template-encoded arresting sites. The arresting sites in DNA have the property of trapping a certain fraction of elongating RNA polymerases that pass through, resulting in locked ternary complexes. Cleavage of the nascent transcript by cleavage factors such as GreA or GreB allows the resumption of elongation from the new 3'terminus. GreA releases sequences of 2 to 3 nucleotides. The sequence is that of Transcription elongation factor GreA from Nautilia profundicola (strain ATCC BAA-1463 / DSM 18972 / AmH).